Reading from the N-terminus, the 197-residue chain is Imidazoleglycerol-phosphate dehydratase (197 aa).

It belongs to the imidazoleglycerol-phosphate dehydratase family.

The protein localises to the cytoplasm. It catalyses the reaction D-erythro-1-(imidazol-4-yl)glycerol 3-phosphate = 3-(imidazol-4-yl)-2-oxopropyl phosphate + H2O. It participates in amino-acid biosynthesis; L-histidine biosynthesis; L-histidine from 5-phospho-alpha-D-ribose 1-diphosphate: step 6/9. This is Imidazoleglycerol-phosphate dehydratase from Pseudomonas fluorescens (strain Pf0-1).